Consider the following 549-residue polypeptide: Cilia- and flagella-associated protein 45 (549 aa).

Positions 1–29 (MPLSPAGVLSSTSTASNRSRNRPRYRTKA) are disordered. Coiled coils occupy residues 119-232 (REEL…MMEV), 259-393 (IVEQ…KRNQ), and 434-522 (AVQV…KIEE). The disordered stretch occupies residues 388–416 (RAKRNQEVADREWRRKEKENAQKKMETEA).

The protein belongs to the CFAP45 family. Microtubule inner protein component of sperm flagellar doublet microtubules. Interacts with AK8; dimerization with AK8 may create a cavity at the interface of the dimer that can accommodate AMP. Interacts with CFAP52. Interacts with ENKUR. Directly interacts with DNALI1. Interacts with DNAH11. Interacts with DNAI1. Expressed in respiratory cells (at protein level).

Its subcellular location is the cytoplasm. It localises to the cytoskeleton. The protein resides in the cilium axoneme. The protein localises to the flagellum axoneme. It is found in the cell projection. Its subcellular location is the cilium. It localises to the flagellum. Microtubule inner protein (MIP) part of the dynein-decorated doublet microtubules (DMTs) in cilia axoneme, which is required for motile cilia beating. It is an AMP-binding protein that may facilitate dynein ATPase-dependent ciliary and flagellar beating via adenine nucleotide homeostasis. May function as a donor of AMP to AK8 and hence promote ADP production. In Sus scrofa (Pig), this protein is Cilia- and flagella-associated protein 45 (CFAP45).